Here is a 404-residue protein sequence, read N- to C-terminus: Argininosuccinate synthase (404 aa).

ATP contacts are provided by residues 11 to 19 (AYSGGLDTS) and A38. 2 residues coordinate L-citrulline: Y91 and S96. G121 contributes to the ATP binding site. The L-aspartate site is built by T123, N127, and D128. Residue N127 participates in L-citrulline binding. Residues R131, S181, S190, E266, and Y278 each coordinate L-citrulline.

Belongs to the argininosuccinate synthase family. Type 1 subfamily. As to quaternary structure, homotetramer.

The protein localises to the cytoplasm. The enzyme catalyses L-citrulline + L-aspartate + ATP = 2-(N(omega)-L-arginino)succinate + AMP + diphosphate + H(+). It functions in the pathway amino-acid biosynthesis; L-arginine biosynthesis; L-arginine from L-ornithine and carbamoyl phosphate: step 2/3. This Sulfurimonas denitrificans (strain ATCC 33889 / DSM 1251) (Thiomicrospira denitrificans (strain ATCC 33889 / DSM 1251)) protein is Argininosuccinate synthase.